The sequence spans 200 residues: Ribonuclease HII (200 aa).

One can recognise an RNase H type-2 domain in the interval 14–200 (ERVAGLDEAG…HRQSFTLFRD (187 aa)). Asp20, Glu21, and Asp112 together coordinate a divalent metal cation.

The protein belongs to the RNase HII family. Mn(2+) is required as a cofactor. Requires Mg(2+) as cofactor.

Its subcellular location is the cytoplasm. It carries out the reaction Endonucleolytic cleavage to 5'-phosphomonoester.. In terms of biological role, endonuclease that specifically degrades the RNA of RNA-DNA hybrids. This is Ribonuclease HII from Salinibacter ruber (strain DSM 13855 / M31).